The chain runs to 333 residues: Holliday junction branch migration complex subunit RuvB (333 aa).

Positions 1–182 (MEERMVSAEA…FGVMARLEYY (182 aa)) are large ATPase domain (RuvB-L). Residues Ile21, Arg22, Gly63, Lys66, Thr67, Thr68, 129–131 (EDY), Arg172, Tyr182, and Arg219 contribute to the ATP site. Thr67 contributes to the Mg(2+) binding site. Residues 183 to 253 (NVEELTTIIE…RAIESLERLQ (71 aa)) are small ATPAse domain (RuvB-S). Residues 256–333 (RLGLDHIDHK…EHFNMEVPNK (78 aa)) form a head domain (RuvB-H) region. Residues Arg311 and Arg316 each coordinate DNA.

Belongs to the RuvB family. Homohexamer. Forms an RuvA(8)-RuvB(12)-Holliday junction (HJ) complex. HJ DNA is sandwiched between 2 RuvA tetramers; dsDNA enters through RuvA and exits via RuvB. An RuvB hexamer assembles on each DNA strand where it exits the tetramer. Each RuvB hexamer is contacted by two RuvA subunits (via domain III) on 2 adjacent RuvB subunits; this complex drives branch migration. In the full resolvosome a probable DNA-RuvA(4)-RuvB(12)-RuvC(2) complex forms which resolves the HJ.

It is found in the cytoplasm. The catalysed reaction is ATP + H2O = ADP + phosphate + H(+). Its function is as follows. The RuvA-RuvB-RuvC complex processes Holliday junction (HJ) DNA during genetic recombination and DNA repair, while the RuvA-RuvB complex plays an important role in the rescue of blocked DNA replication forks via replication fork reversal (RFR). RuvA specifically binds to HJ cruciform DNA, conferring on it an open structure. The RuvB hexamer acts as an ATP-dependent pump, pulling dsDNA into and through the RuvAB complex. RuvB forms 2 homohexamers on either side of HJ DNA bound by 1 or 2 RuvA tetramers; 4 subunits per hexamer contact DNA at a time. Coordinated motions by a converter formed by DNA-disengaged RuvB subunits stimulates ATP hydrolysis and nucleotide exchange. Immobilization of the converter enables RuvB to convert the ATP-contained energy into a lever motion, pulling 2 nucleotides of DNA out of the RuvA tetramer per ATP hydrolyzed, thus driving DNA branch migration. The RuvB motors rotate together with the DNA substrate, which together with the progressing nucleotide cycle form the mechanistic basis for DNA recombination by continuous HJ branch migration. Branch migration allows RuvC to scan DNA until it finds its consensus sequence, where it cleaves and resolves cruciform DNA. The sequence is that of Holliday junction branch migration complex subunit RuvB from Halalkalibacterium halodurans (strain ATCC BAA-125 / DSM 18197 / FERM 7344 / JCM 9153 / C-125) (Bacillus halodurans).